The chain runs to 481 residues: Probable zeta-carotene desaturase (481 aa).

It belongs to the zeta carotene desaturase family. Decylplastoquinone is required as a cofactor. Requires 6-decylubiquinone as cofactor.

The catalysed reaction is 9,9'-di-cis-zeta-carotene + 2 a quinone = 7,7',9,9'-tetra-cis-lycopene + 2 a quinol. The protein operates within carotenoid biosynthesis; lycopene biosynthesis. Catalyzes the conversion of zeta-carotene to lycopene via the intermediary of neurosporene. It carries out two consecutive desaturations (introduction of double bonds) at positions C-7 and C-7'. The protein is Probable zeta-carotene desaturase (zds) of Synechococcus elongatus (strain ATCC 33912 / PCC 7942 / FACHB-805) (Anacystis nidulans R2).